Here is a 558-residue protein sequence, read N- to C-terminus: Laccase-10 (558 aa).

The N-terminal stretch at 1-22 (MVFPIRILVLFALLAFPACVHG) is a signal peptide. Plastocyanin-like domains are found at residues 30-146 (NVVT…PKLG) and 157-308 (EEVI…YSGT). Residue Asn-76 is glycosylated (N-linked (GlcNAc...) asparagine). Cu cation is bound by residues His-80 and His-82. N-linked (GlcNAc...) asparagine glycosylation occurs at Asn-112. Cu cation contacts are provided by His-125 and His-127. Residues Asn-185, Asn-296, Asn-323, Asn-373, Asn-383, Asn-400, and Asn-441 are each glycosylated (N-linked (GlcNAc...) asparagine). Residues 408 to 542 (DFPAKPRRVF…KMAFLVENGK (135 aa)) form the Plastocyanin-like 3 domain. Positions 459, 462, 464, 521, 522, 523, and 527 each coordinate Cu cation. An N-linked (GlcNAc...) asparagine glycan is attached at Asn-545.

Belongs to the multicopper oxidase family. It depends on Cu cation as a cofactor. In terms of tissue distribution, ubiquitous, with lower levels in siliques.

It is found in the secreted. Its subcellular location is the extracellular space. The protein resides in the apoplast. The enzyme catalyses 4 hydroquinone + O2 = 4 benzosemiquinone + 2 H2O. Lignin degradation and detoxification of lignin-derived products. This is Laccase-10 (LAC10) from Arabidopsis thaliana (Mouse-ear cress).